Consider the following 1344-residue polypeptide: Myb-binding protein 1A (1344 aa).

The segment at 1–24 is disordered; it reads MAEMKSPTKAEPASPAEAPQGDRR. Ala-2 is modified (N-acetylalanine). The tract at residues 2–580 is interaction with MYB; sequence AEMKSPTKAE…WDQMMSTLKE (579 aa). Residue Ser-14 is modified to Phosphoserine. N6-acetyllysine is present on residues Lys-69 and Lys-156. 2 short sequence motifs (nuclear export signal) span residues 238–256 and 261–279; these read SEDNIPSLVNILKVAANSV and KLPDVALNLLRLALQENKF. 2 disordered regions span residues 696–752 and 1150–1344; these read NEDE…DVDP and PKSE…VQTP. The segment covering 708 to 730 has biased composition (basic and acidic residues); the sequence is TDEKQLKHGEDADSDSEDSKNSE. Over residues 731 to 746 the composition is skewed to acidic residues; the sequence is SDVDSEDGEESEEEDR. The segment covering 1150 to 1161 has biased composition (basic and acidic residues); sequence PKSEKKNVKDIP. Lys-1151 is covalently cross-linked (Glycyl lysine isopeptide (Lys-Gly) (interchain with G-Cter in SUMO2)). Residues 1154–1344 are required for nuclear and nucleolar localization; that stretch reads KKNVKDIPSD…RVARRRVQTP (191 aa). 2 positions are modified to phosphoserine: Ser-1162 and Ser-1166. Positions 1170-1187 are enriched in basic residues; sequence TKRKKKGFLPETKKRKKL. Ser-1189 bears the Phosphoserine mark. The residue at position 1193 (Thr-1193) is a Phosphothreonine. 2 positions are modified to phosphoserine: Ser-1221 and Ser-1246. A compositionally biased stretch (low complexity) spans 1247 to 1256; that stretch reads PAPNNPTLSP. Thr-1253 is subject to Phosphothreonine. A Phosphoserine modification is found at Ser-1255. Thr-1258 and Thr-1280 each carry phosphothreonine. Phosphoserine occurs at positions 1283, 1305, and 1318. Positions 1301-1316 are enriched in basic residues; sequence VKRRSSQSALPKKRAR. Positions 1317-1329 are enriched in low complexity; that stretch reads LSLVSRSPSLLQS. Arg-1322 is subject to Citrulline. Ser-1323, Ser-1325, and Ser-1329 each carry phosphoserine. Residues 1331 to 1344 are compositionally biased toward basic residues; that stretch reads IRKRRVARRRVQTP.

Belongs to the MYBBP1A family. In terms of assembly, binds to and represses JUN and MYB via the leucine zipper regions present in these proteins. Also binds to and represses PPARGC1A: this interaction is abrogated when PPARGC1A is phosphorylated by MAPK1/ERK. Binds to and stimulates transcription by AHR. Binds to KPNA2. Component of the B-WICH complex, at least composed of SMARCA5/SNF2H, BAZ1B/WSTF, SF3B1, DEK, MYO1C, ERCC6, MYBBP1A and DDX21. Interacts with CLOCK and CRY1. Post-translationally, citrullinated by PADI4.

It localises to the nucleus. The protein localises to the nucleolus. The protein resides in the cytoplasm. Its function is as follows. May activate or repress transcription via interactions with sequence specific DNA-binding proteins. Repression may be mediated at least in part by histone deacetylase activity (HDAC activity). Acts as a corepressor and in concert with CRY1, represses the transcription of the core circadian clock component PER2. Preferentially binds to dimethylated histone H3 'Lys-9' (H3K9me2) on the PER2 promoter. Has a role in rRNA biogenesis together with PWP1. The polypeptide is Myb-binding protein 1A (Mybbp1a) (Rattus norvegicus (Rat)).